A 210-amino-acid polypeptide reads, in one-letter code: Cytochrome c oxidase subunit 2 (210 aa).

At 1–20 (MAFILSFWMIFLLDSVIVLL) the chain is on the mitochondrial intermembrane side. A helical transmembrane segment spans residues 21–42 (SFVCFVCVWICALLFSTVLLVS). Residues 43-60 (KLNNIYCTWDFTASKFID) are Mitochondrial matrix-facing. A helical transmembrane segment spans residues 61–86 (VYWFTIGGMFSLGLLLRLCLLLYFGH). The Mitochondrial intermembrane segment spans residues 87–210 (LNFVSFDLCK…GFMPIVICFI (124 aa)). Residues His157, Cys192, Glu194, Cys196, His200, and Met203 each coordinate Cu cation. Mg(2+) is bound at residue Glu194.

The protein belongs to the cytochrome c oxidase subunit 2 family. Component of the cytochrome c oxidase (complex IV, CIV), a multisubunit enzyme composed of a catalytic core of 3 subunits and several supernumerary subunits. The complex exists as a monomer or a dimer and forms supercomplexes (SCs) in the inner mitochondrial membrane with ubiquinol-cytochrome c oxidoreductase (cytochrome b-c1 complex, complex III, CIII). Requires Cu cation as cofactor.

The protein resides in the mitochondrion inner membrane. It catalyses the reaction 4 Fe(II)-[cytochrome c] + O2 + 8 H(+)(in) = 4 Fe(III)-[cytochrome c] + 2 H2O + 4 H(+)(out). Its function is as follows. Component of the cytochrome c oxidase, the last enzyme in the mitochondrial electron transport chain which drives oxidative phosphorylation. The respiratory chain contains 3 multisubunit complexes succinate dehydrogenase (complex II, CII), ubiquinol-cytochrome c oxidoreductase (cytochrome b-c1 complex, complex III, CIII) and cytochrome c oxidase (complex IV, CIV), that cooperate to transfer electrons derived from NADH and succinate to molecular oxygen, creating an electrochemical gradient over the inner membrane that drives transmembrane transport and the ATP synthase. Cytochrome c oxidase is the component of the respiratory chain that catalyzes the reduction of oxygen to water. Electrons originating from reduced cytochrome c in the intermembrane space (IMS) are transferred via the dinuclear copper A center (CU(A)) of subunit 2 and heme A of subunit 1 to the active site in subunit 1, a binuclear center (BNC) formed by heme A3 and copper B (CU(B)). The BNC reduces molecular oxygen to 2 water molecules using 4 electrons from cytochrome c in the IMS and 4 protons from the mitochondrial matrix. The polypeptide is Cytochrome c oxidase subunit 2 (Leishmania tarentolae (Sauroleishmania tarentolae)).